We begin with the raw amino-acid sequence, 802 residues long: Acetyl-CoA decarbonylase/synthase complex subunit alpha 1 (802 aa).

[4Fe-4S] cluster is bound by residues Cys-68, Cys-71, Cys-76, and Cys-86. Position 109 (His-109) interacts with CO. [Ni-4Fe-4S] cluster-binding residues include His-243, Cys-271, and Cys-310. 4Fe-4S ferredoxin-type domains are found at residues 395–424 and 435–464; these read DEALMEEINKCTQCMNCVFTCPHSLRVDQG and SKLAQLEEQCLACMKCEQACPKNIKIINVI. Residues Cys-405, Cys-408, Cys-411, Cys-415, Cys-444, Cys-447, Cys-450, and Cys-454 each contribute to the [4Fe-4S] cluster site. Residues Cys-512, Cys-541, and Cys-576 each coordinate [Ni-4Fe-4S] cluster.

Belongs to the Ni-containing carbon monoxide dehydrogenase family. Heterotetramer of two alpha and two epsilon subunits. The ACDS complex is made up of alpha, epsilon, beta, gamma and delta subunits with a probable stoichiometry of (alpha(2)epsilon(2))(4)-beta(8)-(gamma(1)delta(1))(8). [4Fe-4S] cluster serves as cofactor. It depends on [Ni-4Fe-4S] cluster as a cofactor.

The catalysed reaction is CO + 2 oxidized [2Fe-2S]-[ferredoxin] + H2O = 2 reduced [2Fe-2S]-[ferredoxin] + CO2 + 2 H(+). In terms of biological role, part of the ACDS complex that catalyzes the reversible cleavage of acetyl-CoA, allowing autotrophic growth from CO(2). The alpha-epsilon subcomponent functions as a carbon monoxide dehydrogenase. This chain is Acetyl-CoA decarbonylase/synthase complex subunit alpha 1, found in Archaeoglobus fulgidus (strain ATCC 49558 / DSM 4304 / JCM 9628 / NBRC 100126 / VC-16).